Here is a 326-residue protein sequence, read N- to C-terminus: Aspartate carbamoyltransferase catalytic subunit (326 aa).

Positions 58 and 59 each coordinate carbamoyl phosphate. Lys86 is a binding site for L-aspartate. Positions 108, 141, and 144 each coordinate carbamoyl phosphate. Positions 181 and 239 each coordinate L-aspartate. Residues Gly280 and Pro281 each coordinate carbamoyl phosphate.

It belongs to the aspartate/ornithine carbamoyltransferase superfamily. ATCase family. As to quaternary structure, heterododecamer (2C3:3R2) of six catalytic PyrB chains organized as two trimers (C3), and six regulatory PyrI chains organized as three dimers (R2).

The catalysed reaction is carbamoyl phosphate + L-aspartate = N-carbamoyl-L-aspartate + phosphate + H(+). It participates in pyrimidine metabolism; UMP biosynthesis via de novo pathway; (S)-dihydroorotate from bicarbonate: step 2/3. Its function is as follows. Catalyzes the condensation of carbamoyl phosphate and aspartate to form carbamoyl aspartate and inorganic phosphate, the committed step in the de novo pyrimidine nucleotide biosynthesis pathway. The chain is Aspartate carbamoyltransferase catalytic subunit from Synechococcus sp. (strain JA-3-3Ab) (Cyanobacteria bacterium Yellowstone A-Prime).